A 493-amino-acid chain; its full sequence is MTTVRTRIAPSPTGDPHVGTAYIALFNLCFARQHGGQFILRIEDTDQLRSTRESEQQIFDALRWLGIEWDEGPDVGGPHGPYRQSERGEIYKQYSDELVAKGHAFPCFCSAERLDEVRAQQMANKETPRYDGHCMHLDPAEAQRRIAAGESHVVRMKVPSEGVCVVPDMLRGDVEIPWDRMDMQVLMKADGLPTYFLANVVDDHLMGITHVLRGEEWLPSAPKLIKLYEYFGWEQPALCYMPLLRNPDKSKLSKRKNPTSITFYERMGYLPQAMLNYLGRMGWSMPDEREKFSLNEMIEHFDINRVSLGGPIFDLEKLSWLNGQWLRELPVETFAAEVQKWALNPEYLMKIAPHVQGRVETFSQIAPLAGFFFSGALNLDAKLFEHKKLSPDQVRQLMQLILWKLESLRQWEKERITGCIQAVVEHLELKLRDAMPLMFAAITGQASSVSVLDAMEILGPDLTRFRLRQALELLGGTSKKETKEWEKLLASIA.

Positions 10-20 (PSPTGDPHVGT) match the 'HIGH' region motif. The Zn(2+) site is built by Cys-107, Cys-109, Cys-134, and His-136. The 'KMSKS' region motif lies at 251–255 (KLSKR). ATP is bound at residue Lys-254.

Belongs to the class-I aminoacyl-tRNA synthetase family. Glutamate--tRNA ligase type 1 subfamily. Monomer. The cofactor is Zn(2+).

The protein localises to the cytoplasm. It carries out the reaction tRNA(Glu) + L-glutamate + ATP = L-glutamyl-tRNA(Glu) + AMP + diphosphate. Its function is as follows. Catalyzes the attachment of glutamate to tRNA(Glu) in a two-step reaction: glutamate is first activated by ATP to form Glu-AMP and then transferred to the acceptor end of tRNA(Glu). This is Glutamate--tRNA ligase from Ectopseudomonas mendocina (strain ymp) (Pseudomonas mendocina).